The chain runs to 305 residues: Glycine--tRNA ligase alpha subunit (305 aa).

It belongs to the class-II aminoacyl-tRNA synthetase family. In terms of assembly, tetramer of two alpha and two beta subunits.

The protein resides in the cytoplasm. It carries out the reaction tRNA(Gly) + glycine + ATP = glycyl-tRNA(Gly) + AMP + diphosphate. This chain is Glycine--tRNA ligase alpha subunit, found in Janthinobacterium sp. (strain Marseille) (Minibacterium massiliensis).